The chain runs to 242 residues: MSKSRLTVFSFVRRFLLRLMVVLAVFWAGGIALFSVAPVPFSAVMVERQVSAWLHGNFRYVAHSDWVSMDQISPWMGLAVIAAEDQKFPEHRGFDVASIEKALAHNERNENRIRGASTISQQTAKNLFLWDGRSWVRKGLEAGLTLGIETVWSKKRILTVYLNIAEFGDGVFGVEAAAQRYFHKPASKLTRSEAALLAAVLPNPLRFKVSSPSGYVRSRQAWILRQMYQLGGEPFMQQHQLD.

A helical transmembrane segment spans residues L19–V39.

It belongs to the glycosyltransferase 51 family.

It localises to the cell inner membrane. It catalyses the reaction [GlcNAc-(1-&gt;4)-Mur2Ac(oyl-L-Ala-gamma-D-Glu-L-Lys-D-Ala-D-Ala)](n)-di-trans,octa-cis-undecaprenyl diphosphate + beta-D-GlcNAc-(1-&gt;4)-Mur2Ac(oyl-L-Ala-gamma-D-Glu-L-Lys-D-Ala-D-Ala)-di-trans,octa-cis-undecaprenyl diphosphate = [GlcNAc-(1-&gt;4)-Mur2Ac(oyl-L-Ala-gamma-D-Glu-L-Lys-D-Ala-D-Ala)](n+1)-di-trans,octa-cis-undecaprenyl diphosphate + di-trans,octa-cis-undecaprenyl diphosphate + H(+). Its pathway is cell wall biogenesis; peptidoglycan biosynthesis. In terms of biological role, peptidoglycan polymerase that catalyzes glycan chain elongation from lipid-linked precursors. This chain is Biosynthetic peptidoglycan transglycosylase, found in Shigella boydii serotype 4 (strain Sb227).